Consider the following 281-residue polypeptide: MADNMTTTQIEVGPGATNATINFEAGILECYERLSWQRALDYPGQDRLNRLKRKLESRIKTHNKSEPESKRMSLEERKAIGVKMMKVLLFMNPSAGIEGFEPYCMKNSSTSNCPNCNWTDYPPTPGKCLDDIEEEPENVDDPTEIVLRDMNNKDARQKIKEEVNTQKEGKFRLAIKRDIRNVVSLRVLVNGTFLKHPNGYKSLSTLHRLNAYDQSGRLVAKLVATDDLTVEDEEDGHRILNSLFERFDEGHSKPIRAAETAVGVLSQFGQEHRLSPEEGDN.

Positions 1–93 (MADNMTTTQI…MMKVLLFMNP (93 aa)) are RNA-binding and homodimerization. A G1P2-binding region spans residues 1–103 (MADNMTTTQI…SAGIEGFEPY (103 aa)). A Nuclear localization signal motif is present at residues 50–55 (RLKRKL).

It belongs to the influenza B viruses NS1 family. In terms of assembly, homodimer. Interacts with and inhibits human G1P2 conjugation by UBE1L.

The protein resides in the host cytoplasm. It localises to the host nucleus. Its function is as follows. Binds and inhibits the conjugation of the ubiquitin-like G1P2/ISG15 protein to its target proteins. Since G1P2/ISG15 is an early antiviral protein, NS1 may inhibit the host antiviral response. Prevents EIF2AK2/PKR activation, either by binding double strand RNA or by interacting directly with EIF2AK2/PKR. Also binds poly(A) and U6 snRNA. The polypeptide is Non-structural protein 1 (Homo sapiens (Human)).